Consider the following 570-residue polypeptide: Carotenoid cleavage dioxygenase 8, chloroplastic (570 aa).

The N-terminal 56 residues, 1–56, are a transit peptide targeting the chloroplast; that stretch reads MASLITTKAMMSHHHVLSSTRITTLYSDNSIGDQQIKTKPQVPHRLFARRIFGVTR. The Fe cation site is built by His254, His305, His372, and His563.

It belongs to the carotenoid oxygenase family. Fe(2+) is required as a cofactor. In terms of tissue distribution, expressed in flowers, siliques, inflorescence stems, petiole and leaves, and at a much higher level in roots.

It is found in the plastid. Its subcellular location is the chloroplast. It catalyses the reaction 9-cis-10'-apo-beta-carotenal + 2 O2 = (2E,4E,6E)-7-hydroxy-4-methylhepta-2,4,6-trienal + (11R)-carlactone. The catalysed reaction is all-trans-10'-apo-beta-carotenal + O2 = (2E,4E,6E)-4-methylocta-2,4,6-trienedial + 13-apo-beta-carotenone. In terms of biological role, involved in strigolactones biosynthesis by cleaving the C(27) 9-cis-10'-apo-beta-carotenal produced by CCD7. Produces the C(19) carlactone and a C(8) hydroxyaldehyde. Also shows lower activity with all-trans-10'-apo-beta-carotenal producing a C(9) dialdehyde and the C(18) 13-apo-beta-carotenone. Strigolactones are hormones that inhibit tillering and shoot branching through the MAX-dependent pathway, contribute to the regulation of shoot architectural response to phosphate-limiting conditions and function as rhizosphere signal that stimulates hyphal branching of arbuscular mycorrhizal fungi and trigger seed germination of root parasitic weeds. Also active on other carotenoid substrates like licopene or zeaxanthin. This chain is Carotenoid cleavage dioxygenase 8, chloroplastic, found in Arabidopsis thaliana (Mouse-ear cress).